Here is a 311-residue protein sequence, read N- to C-terminus: Cell division protein FtsQ (311 aa).

The tract at residues 1–28 is disordered; sequence MTTRSPARPLIARRSTPAPTPAPHDPAP. Topologically, residues 1–46 are cytoplasmic; the sequence is MTTRSPARPLIARRSTPAPTPAPHDPAPSRLSYRVTRLWLTPIFRK. Residues 47 to 67 traverse the membrane as a helical segment; it reads ALHLGIPVFALFAAVTWYLGD. Residues 68–311 lie on the Periplasmic side of the membrane; sequence ETRVAELFEA…AERPDGDTRG (244 aa). A POTRA domain is found at 91-159; that stretch reads FRVNVLGIDG…GYLAVRIDER (69 aa).

Belongs to the FtsQ/DivIB family. FtsQ subfamily.

Its subcellular location is the cell inner membrane. Essential cell division protein. This chain is Cell division protein FtsQ, found in Jannaschia sp. (strain CCS1).